Here is a 255-residue protein sequence, read N- to C-terminus: Triosephosphate isomerase (255 aa).

10–12 is a substrate binding site; it reads NWK. Histidine 96 serves as the catalytic Electrophile. The Proton acceptor role is filled by glutamate 168. Residues glycine 174, serine 213, and 234–235 each bind substrate; that span reads GG.

It belongs to the triosephosphate isomerase family. Homodimer.

Its subcellular location is the cytoplasm. The catalysed reaction is D-glyceraldehyde 3-phosphate = dihydroxyacetone phosphate. The protein operates within carbohydrate biosynthesis; gluconeogenesis. Its pathway is carbohydrate degradation; glycolysis; D-glyceraldehyde 3-phosphate from glycerone phosphate: step 1/1. Involved in the gluconeogenesis. Catalyzes stereospecifically the conversion of dihydroxyacetone phosphate (DHAP) to D-glyceraldehyde-3-phosphate (G3P). In Histophilus somni (strain 129Pt) (Haemophilus somnus), this protein is Triosephosphate isomerase.